A 417-amino-acid polypeptide reads, in one-letter code: UDP-N-acetylglucosamine 1-carboxyvinyltransferase (417 aa).

Residue 22–23 participates in phosphoenolpyruvate binding; sequence KN. UDP-N-acetyl-alpha-D-glucosamine is bound at residue arginine 93. Cysteine 117 acts as the Proton donor in catalysis. A 2-(S-cysteinyl)pyruvic acid O-phosphothioketal modification is found at cysteine 117. UDP-N-acetyl-alpha-D-glucosamine contacts are provided by residues 122-126, aspartate 304, and isoleucine 326; that span reads RPVDQ.

This sequence belongs to the EPSP synthase family. MurA subfamily.

The protein resides in the cytoplasm. It catalyses the reaction phosphoenolpyruvate + UDP-N-acetyl-alpha-D-glucosamine = UDP-N-acetyl-3-O-(1-carboxyvinyl)-alpha-D-glucosamine + phosphate. It functions in the pathway cell wall biogenesis; peptidoglycan biosynthesis. Cell wall formation. Adds enolpyruvyl to UDP-N-acetylglucosamine. The sequence is that of UDP-N-acetylglucosamine 1-carboxyvinyltransferase from Neisseria meningitidis serogroup C (strain 053442).